The following is a 240-amino-acid chain: MADS-box protein SVP (240 aa).

One can recognise an MADS-box domain in the interval arginine 3 to phenylalanine 57. One can recognise a K-box domain in the interval glutamine 87–arginine 180. Residues valine 202–glycine 240 are disordered. The segment covering glycine 206 to glycine 220 has biased composition (polar residues).

In terms of assembly, forms a heterodimer with AP1 and SVP. Interacts with the SEU-LUG corepressor complex when complexed to AP1. Interacts with AGL15. Interacts with AGL16. As to expression, detected in roots and leaves. Expressed at very low levels in flowers and siliques. Present in floral meristems.

Its subcellular location is the nucleus. In terms of biological role, transcription repressor that inhibit floral transition in the autonomous flowering pathway, independent of photoperiod and temperature. Acts in a dosage-dependent manner. Together with AGL24 and AP1, controls the identity of the floral meristem and regulates expression of class B, C and E genes. Promotes EFM expression to suppress flowering. The sequence is that of MADS-box protein SVP from Arabidopsis thaliana (Mouse-ear cress).